The sequence spans 164 residues: Glycine cleavage system H protein, mitochondrial (164 aa).

The transit peptide at methionine 1–phenylalanine 34 directs the protein to the mitochondrion. Residues valine 56–lysine 138 form the Lipoyl-binding domain. Lysine 97 carries the post-translational modification N6-lipoyllysine.

It belongs to the GcvH family. The glycine cleavage system is composed of four proteins: P, T, L and H. It depends on (R)-lipoate as a cofactor.

Its subcellular location is the mitochondrion. Functionally, the glycine cleavage system catalyzes the degradation of glycine. The H protein shuttles the methylamine group of glycine from the P protein to the T protein. In Oryza sativa subsp. indica (Rice), this protein is Glycine cleavage system H protein, mitochondrial (GDCSH).